The sequence spans 369 residues: Biglycan (369 aa).

The signal sequence occupies residues 1 to 16; that stretch reads MWPLWLVASLLALSQA. A propeptide spanning residues 17–37 is cleaved from the precursor; it reads LPFEQKGFWDFTLDDGLPMLN. O-linked (Xyl...) (glycosaminoglycan) serine glycosylation is found at serine 42 and serine 48. 2 cysteine pairs are disulfide-bonded: cysteine 64/cysteine 70 and cysteine 68/cysteine 77. LRR repeat units follow at residues 83-103, 104-127, 128-151, 152-172, 173-196, 197-221, 222-242, 243-266, 267-290, 291-313, 314-343, and 344-369; these read KAVP…NNDI, SELR…NNKI, SKIH…KNHL, VEIP…DNRI, RKVP…GNPL, ENSG…EAKL, TGIP…HNKI, QAIE…HNQI, RMIE…NNKL, SRVP…TNNI, TKVG…NNPV, and PYWE…NYKK. Asparagine 271 and asparagine 312 each carry an N-linked (GlcNAc...) asparagine glycan. A disulfide bond links cysteine 322 and cysteine 355.

It belongs to the small leucine-rich proteoglycan (SLRP) family. SLRP class I subfamily. As to quaternary structure, homodimer. Forms a ternary complex with MFAP2 and ELN. Post-translationally, the two attached glycosaminoglycan chains can be either chondroitin sulfate or dermatan sulfate.

It localises to the secreted. The protein resides in the extracellular space. Its subcellular location is the extracellular matrix. Its function is as follows. May be involved in collagen fiber assembly. The sequence is that of Biglycan (BGN) from Canis lupus familiaris (Dog).